We begin with the raw amino-acid sequence, 448 residues long: DEAD-box ATP-dependent RNA helicase CshB (448 aa).

The short motif at 4-32 is the Q motif element; sequence HPFEQFNLESSLIDAVKDLNFEKPTEIQN. Positions 35–206 constitute a Helicase ATP-binding domain; sequence IPRILKRTNL…NKYLSHPEYV (172 aa). An ATP-binding site is contributed by 48–55; it reads SQTGTGKS. Positions 154 to 157 match the DEAD box motif; sequence DEAD. The Helicase C-terminal domain maps to 236–386; the sequence is NLIDILNPYL…EVKAHNQRQA (151 aa). The segment covering 400–418 has biased composition (basic residues); the sequence is NKVRSKIKNKVKPGYKKKF. The interval 400–448 is disordered; the sequence is NKVRSKIKNKVKPGYKKKFKQEVEKMKRQERKQFSKQQNRQKRKQNKKG. Basic and acidic residues predominate over residues 419–432; the sequence is KQEVEKMKRQERKQ. Over residues 438–448 the composition is skewed to basic residues; the sequence is NRQKRKQNKKG.

This sequence belongs to the DEAD box helicase family. CshB subfamily.

The protein resides in the cytoplasm. The enzyme catalyses ATP + H2O = ADP + phosphate + H(+). Its function is as follows. Probable DEAD-box RNA helicase. May work in conjunction with the cold shock proteins to ensure proper initiation of transcription at low and optimal temperatures. This Staphylococcus aureus (strain NCTC 8325 / PS 47) protein is DEAD-box ATP-dependent RNA helicase CshB.